The sequence spans 569 residues: MSASCLDLISAPPQPDSDRMDRALNPGRQNSPDTAGELTLLHTAPGGLGMALEEELAMLTGDREDELQESAPETPVSGQDSDLLSLFRQKEKDLVLAAKLGKALLERNQDLTKQYDKMTKDLNDRLELLEQEKHELRRRLESREGEWEGRVAELETDVQHLQGELERHQLQLRDADREKSRAISELSEQNHRLLEQLSRAAEVEKQLSTQVHSLRDDFKEKSISSNQHMTRLETLQAEIRMLSERKQDLERRVCAVLEENQQLQNTVEELRERTLELEKHCHHKDLQKILPETLLTIIKLKTNYSQKKKKTEHLILHTRRAHTHLCRAPSEVQSCMGSLSCVWCIQRRKDCDLFLLQLRLQLWEAYCQVRSICSQLRGNDITDSALSTDSSMDESSETLSAKDVPTGSLHSSLLELRRLTQNLLDGNESTVALLSVEVSSSREENERLRAMTEVHEPNEQLQSAIRDRDEAIAKKKAVEMELAKCKIDIMSLNSBQLLDAIQQKLNLSQQLEAWQDDMHRVIDQQLMDKHQEEWKDPPFSFSRRGAAASRPTQRLADRDKPLFSFFKKN.

The segment at M1–G36 is disordered. Positions A97–G101 match the CC1 box motif. Positions K102 to H283 form a coiled coil. The tract at residues A385–P405 is disordered. The stretch at N458 to R520 forms a coiled coil. Residues E533–R554 are disordered.

The protein belongs to the BICDR family. As to quaternary structure, part of a tripartite complex with dynein and dynactin, acts an adapter linking the dynein motor complex and dynactin. In terms of tissue distribution, highly expressed in developing neural tissues and developing eye.

It localises to the cytoplasm. Its subcellular location is the cytoskeleton. The protein localises to the microtubule organizing center. It is found in the centrosome. Its function is as follows. Acts as an adapter protein linking the dynein motor complex to various cargos and converts dynein from a non-processive to a highly processive motor in the presence of dynactin. Facilitates the interaction between dynein and dynactin and activates dynein processivity (the ability to move along a microtubule for a long distance without falling off the track). Predominantly recruits 2 dyneins, which increases both the force and speed of the microtubule motor. Component of secretory vesicle machinery in developing neurons that acts as a regulator of neurite outgrowth. Regulates the secretory vesicle transport by controlling the accumulation of Rab6-containing secretory vesicles in the pericentrosomal region restricting anterograde secretory transport during the early phase of neuronal differentiation, thereby inhibiting neuritogenesis. This is BICD family-like cargo adapter 1 (bicdl1) from Danio rerio (Zebrafish).